Here is a 917-residue protein sequence, read N- to C-terminus: Protein STE5 (917 aa).

Disordered regions lie at residues M1–T25 and F58–N151. Polar residues predominate over residues F16–T25. The span at S69–S84 shows a compositional bias: low complexity. Polar residues-rich tracts occupy residues R85–Y110 and T118–R138. S329 is subject to Phosphoserine. Residues H778–L794 show a composition bias toward acidic residues. Residues H778–A821 form a disordered region. Polar residues predominate over residues G799–A821.

It to yeast FAR1. Post-translationally, may be regulated at the phosphorylation level, and by the mating type of the cell and depends on an intact pheromone-response pathway.

The protein resides in the cytoplasm. Its function is as follows. Component of the pheromone signal transduction pathway. It mediates pheromone signals acting between STE20 and STE11. It is absolutely required for pheromone-induced transcription of FUS1. May play a role in cell-cycle arrest in response to pheromone. This Saccharomyces cerevisiae (strain ATCC 204508 / S288c) (Baker's yeast) protein is Protein STE5 (STE5).